The chain runs to 269 residues: tRNA pseudouridine synthase A (269 aa).

Catalysis depends on Asp55, which acts as the Nucleophile. Tyr111 is a binding site for substrate.

This sequence belongs to the tRNA pseudouridine synthase TruA family.

It catalyses the reaction uridine(38/39/40) in tRNA = pseudouridine(38/39/40) in tRNA. Formation of pseudouridine at positions 38, 39 and 40 in the anticodon stem and loop of transfer RNAs. The sequence is that of tRNA pseudouridine synthase A from Methanosarcina acetivorans (strain ATCC 35395 / DSM 2834 / JCM 12185 / C2A).